The sequence spans 405 residues: MRATDRMGARAVSELRLALLFVLVLGTPRLGVQGEDGLDFPEYDGVDRVINVNAKNYKNVFKKYEVLALLYHEPPEDDKASQRQFEMEELILELAAQVLEDKGVGFGLVDSEKDAAVAKKLGLTEEDSVYVFKGDEVIEYDGEFSADTLVEFLLDVLEDPVELIEGERELQAFENIEDEIKLIGYFKSKDSEHYKAYEDAAEEFHPYIPFFATFDSKVAKKLTLKLNEIDFYEAFMEEPMTIPDKPNSEEEIVSFVEEHRRSTLRKLKPESMYETWEDDLDGIHIVAFAEEADPDGYEFLETLKAVAQDNTENPDLSIIWIDPDDFPLLVPYWEKTFDIDLSAPQIGVVNVTDADSIWMEMDNEEDLPSADELEDWLEDVLEGEINTEDDDDDDDDDDDDDDDDD.

The signal sequence occupies residues 1–34 (MRATDRMGARAVSELRLALLFVLVLGTPRLGVQG). Position 43 is a phosphotyrosine (Y43). S81 carries the post-translational modification Phosphoserine. T124 is modified (phosphothreonine). Phosphoserine is present on S216. N-linked (GlcNAc...) asparagine glycosylation is present at N350. The tract at residues 382–405 (EGEINTEDDDDDDDDDDDDDDDDD) is disordered.

Belongs to the calsequestrin family. In terms of assembly, monomer; increases in response to a depletion of intracellular calcium. Homodimer. Homotetramer and homopolymer. Can form linear homooligomers. Ca(2+) ions promote oligomerization. Interacts (via C-terminal end and preferentially with the monomeric form) with STIM1; this interaction increases in response to a depletion of intracellular calcium, decreases both STIM1 aggregation and clustering, interaction of STIM1 with ORAI1 and store-operated Ca(2+) entry (SOCE) activity. Interacts with ASPH and TRDN. N-glycosylated. As to expression, detected in skeletal muscle (at protein level). Detected in skeletal muscle.

It is found in the endoplasmic reticulum. The protein resides in the sarcoplasmic reticulum. The protein localises to the sarcoplasmic reticulum lumen. Its subcellular location is the sarcoplasmic reticulum membrane. It localises to the mitochondrion matrix. Calsequestrin is a high-capacity, moderate affinity, calcium-binding protein and thus acts as an internal calcium store in muscle. Calcium ions are bound by clusters of acidic residues at the protein surface, often at the interface between subunits. Can bind around 80 Ca(2+) ions. Regulates the release of lumenal Ca(2+) via the calcium release channel RYR1; this plays an important role in triggering muscle contraction. Negatively regulates store-operated Ca(2+) entry (SOCE) activity. This is Calsequestrin-1 (Casq1) from Mus musculus (Mouse).